Here is a 225-residue protein sequence, read N- to C-terminus: 2-C-methyl-D-erythritol 4-phosphate cytidylyltransferase (225 aa).

It belongs to the IspD/TarI cytidylyltransferase family. IspD subfamily.

It catalyses the reaction 2-C-methyl-D-erythritol 4-phosphate + CTP + H(+) = 4-CDP-2-C-methyl-D-erythritol + diphosphate. It participates in isoprenoid biosynthesis; isopentenyl diphosphate biosynthesis via DXP pathway; isopentenyl diphosphate from 1-deoxy-D-xylulose 5-phosphate: step 2/6. Catalyzes the formation of 4-diphosphocytidyl-2-C-methyl-D-erythritol from CTP and 2-C-methyl-D-erythritol 4-phosphate (MEP). This Cereibacter sphaeroides (strain ATCC 17023 / DSM 158 / JCM 6121 / CCUG 31486 / LMG 2827 / NBRC 12203 / NCIMB 8253 / ATH 2.4.1.) (Rhodobacter sphaeroides) protein is 2-C-methyl-D-erythritol 4-phosphate cytidylyltransferase.